The primary structure comprises 368 residues: DNA replication and repair protein RecF (368 aa).

Residue 30–37 (GNNAQGKT) participates in ATP binding.

It belongs to the RecF family.

Its subcellular location is the cytoplasm. Functionally, the RecF protein is involved in DNA metabolism; it is required for DNA replication and normal SOS inducibility. RecF binds preferentially to single-stranded, linear DNA. It also seems to bind ATP. The sequence is that of DNA replication and repair protein RecF from Streptococcus pyogenes serotype M18 (strain MGAS8232).